The sequence spans 140 residues: Transmembrane protein 107 (140 aa).

A run of 2 helical transmembrane segments spans residues 7-27 (LVPS…TIFW) and 53-73 (LIIA…GFLS). The N-linked (GlcNAc...) asparagine glycan is linked to Asn79. 2 consecutive transmembrane segments (helical) span residues 84–104 (LLSV…LFEG) and 113–133 (IMSF…IAVF).

The protein resides in the membrane. In terms of biological role, may play a role in cilia formation and embryonic patterning. The sequence is that of Transmembrane protein 107 (tmem107) from Xenopus laevis (African clawed frog).